The following is a 267-amino-acid chain: Thiamine pyrophosphokinase 2 (267 aa).

It belongs to the thiamine pyrophosphokinase family.

It localises to the cytoplasm. Its subcellular location is the cytosol. It carries out the reaction thiamine + ATP = thiamine diphosphate + AMP + H(+). The protein operates within cofactor biosynthesis; thiamine diphosphate biosynthesis; thiamine diphosphate from thiamine: step 1/1. Functionally, catalyzes the phosphorylation of thiamine to thiamine pyrophosphate (TPP). TPP is an active cofactor for enzymes involved in glycolysis and energy production. Plant leaves require high levels of TPP for photosynthesis and carbohydrate metabolism. The protein is Thiamine pyrophosphokinase 2 (TPK2) of Oryza sativa subsp. japonica (Rice).